Consider the following 400-residue polypeptide: Delta(12) fatty acid desaturase (400 aa).

A helical membrane pass occupies residues 91-111 (LAWPAYWIMQGIVCTGIWVLA). The Histidine box-1 motif lies at 112 to 116 (HECGH). The short motif at 148–152 (HSKHH) is the Histidine box-2 element. A run of 3 helical transmembrane segments spans residues 199 to 219 (IVTL…YLIM), 245 to 265 (FFDI…LIYA), and 277 to 297 (YYIV…FLQH). Positions 339-343 (HVAHH) match the Histidine box-3 motif.

It belongs to the fatty acid desaturase type 1 family.

It is found in the membrane. The enzyme catalyses (9Z)-octadecenoyl-CoA + 2 Fe(II)-[cytochrome b5] + O2 + 2 H(+) = (9Z,12Z)-octadecadienoyl-CoA + 2 Fe(III)-[cytochrome b5] + 2 H2O. It carries out the reaction (9Z)-hexadecenoyl-CoA + 2 Fe(II)-[cytochrome b5] + O2 + 2 H(+) = (9Z,12Z)-hexadecadienoyl-CoA + 2 Fe(III)-[cytochrome b5] + 2 H2O. It functions in the pathway lipid metabolism; polyunsaturated fatty acid biosynthesis. Functionally, catalyzes the desaturation of oleic acid (Delta(9)-18:1) to linoleic acid (Delta(9), Delta(12)-18:2). The chain is Delta(12) fatty acid desaturase from Mortierella alpina (Oleaginous fungus).